The chain runs to 937 residues: Calsyntenin-2 (937 aa).

Residues 1–22 form the signal peptide; it reads MKMRAITAMLLLVLSGQCGILA. Residues 23–818 are Extracellular-facing; that stretch reads GKVNKHKPWI…NSDHISGTPP (796 aa). 2 consecutive Cadherin domains span residues 32-148 and 149-249; these read IETS…SPVF and REPL…KPGW. N86 carries N-linked (GlcNAc...) asparagine glycosylation. N-linked (GlcNAc...) asparagine glycosylation is found at N330, N365, and N716. A helical transmembrane segment spans residues 819–839; the sequence is AATVVIVMCIAALVVIVVLGI. The Cytoplasmic portion of the chain corresponds to 840 to 937; it reads YRIHTTHQDS…LEWDPSTLPY (98 aa). A disordered region spans residues 846 to 937; that stretch reads HQDSSKEDEE…LEWDPSTLPY (92 aa). Polar residues predominate over residues 865–874; sequence DNSNLNSIEG. Acidic residues-rich tracts occupy residues 881–900 and 907–917; these read VREE…DDLA and ESEDSDEDEET.

Belongs to the calsyntenin family. In terms of assembly, homooligomer and heterooligomer; mediates both homophilic and heterophilc interactions with clstn1 and clstn3 paralogs via cadherin domains. By 48 hours post-fertilization (hpf), widely expressed in the brain, with strong expression in the telencephalon and the midbrain.

The protein resides in the postsynaptic cell membrane. It is found in the endoplasmic reticulum membrane. It localises to the golgi apparatus membrane. The protein localises to the cell projection. Its subcellular location is the dendrite. In terms of biological role, postsynaptic adhesion molecule. Promotes synapse development by acting as a cell adhesion molecule at the postsynaptic membrane, which associates with presynaptic neurexins. In Danio rerio (Zebrafish), this protein is Calsyntenin-2 (clstn2a).